The primary structure comprises 237 residues: DNA repair protein RecO (237 aa).

This sequence belongs to the RecO family.

Involved in DNA repair and RecF pathway recombination. The protein is DNA repair protein RecO of Actinobacillus succinogenes (strain ATCC 55618 / DSM 22257 / CCUG 43843 / 130Z).